The chain runs to 100 residues: ATP synthase subunit c (100 aa).

2 helical membrane passes run 27-47 (SVIAAGIGLGLAALGGAIGMG) and 72-92 (FIALAMIEAQVIYALVITLIV).

The protein belongs to the ATPase C chain family. In terms of assembly, F-type ATPases have 2 components, F(1) - the catalytic core - and F(0) - the membrane proton channel. F(1) has five subunits: alpha(3), beta(3), gamma(1), delta(1), epsilon(1). F(0) has three main subunits: a(1), b(2) and c(10-14). The alpha and beta chains form an alternating ring which encloses part of the gamma chain. F(1) is attached to F(0) by a central stalk formed by the gamma and epsilon chains, while a peripheral stalk is formed by the delta and b chains.

The protein resides in the cell inner membrane. Functionally, f(1)F(0) ATP synthase produces ATP from ADP in the presence of a proton or sodium gradient. F-type ATPases consist of two structural domains, F(1) containing the extramembraneous catalytic core and F(0) containing the membrane proton channel, linked together by a central stalk and a peripheral stalk. During catalysis, ATP synthesis in the catalytic domain of F(1) is coupled via a rotary mechanism of the central stalk subunits to proton translocation. This Campylobacter curvus (strain 525.92) protein is ATP synthase subunit c.